The chain runs to 239 residues: Protein LIFEGUARD 2 (239 aa).

Helical transmembrane passes span 41–61 (LLVT…SVFF), 66–86 (AGFA…CPLY), 96–116 (YLLL…TCAF), 121–141 (VILE…LYTF), 156–176 (FLFG…LFPL), 179–199 (ISVM…IVYD), and 213–233 (IWAA…LLTL).

Belongs to the BI1 family. In terms of tissue distribution, expressed in seedlings, roots, leaves, inflorescences and flowers.

Its subcellular location is the membrane. Regulates the brassinosteroid (BR) signaling pathway that mediates cell elongation and organ morphogenesis. In terms of biological role, (Microbial infection) Facilitates the development of the powdery mildew fungus E.cruciferarum. Its function is as follows. (Microbial infection) May prevent cell death upon A.alternata f.sp. lycopersici (AAL) toxin treatment. The chain is Protein LIFEGUARD 2 from Arabidopsis thaliana (Mouse-ear cress).